The chain runs to 673 residues: Potassium voltage-gated channel subfamily KQT member 1 (673 aa).

Disordered stretches follow at residues 1–28 (MAAA…RGSA) and 61–80 (GPSS…LGPR). Topologically, residues 1–118 (MAAATSPPRA…YNFLERPTGW (118 aa)) are cytoplasmic. The residue at position 27 (S27) is a Phosphoserine. Residues 66 to 75 (AAPAASPAAA) show a composition bias toward low complexity. Residues 119 to 140 (KCFVYHFAVFLIVLVCLIFSVL) form a helical membrane-spanning segment. Topologically, residues 141-151 (STIEQYVALAT) are extracellular. The helical transmembrane segment at 152–174 (GTLFWMEIVLVVFFGTEYAVRLW) threads the bilayer. Over 175–190 (SAGCRSKYVGIWGRLR) the chain is Cytoplasmic. Residues 191-216 (FARKPISIIDLIVVVASMVVLCVGSK) form a helical membrane-spanning segment. At 217–224 (GQVFATSA) the chain is on the extracellular side. Residues 225-240 (IRGIRFLQILRMLHVD) form a helical; Voltage-sensor membrane-spanning segment. Residues 236-244 (MLHVDRQGG) form an interaction with KCNE3 region. At 241 to 258 (RQGGTWRLLGSVVFIHRQ) the chain is on the cytoplasmic side. Q242 is a binding site for a 1,2-diacyl-sn-glycero-3-phospho-(1D-myo-inositol-4,5-bisphosphate). The chain crosses the membrane as a helical span at residues 259–281 (ELITTLYIGFLGLIFSSYFVYLA). The Extracellular segment spans residues 282-297 (EKDAVNESGQVEFGSY). N-linked (GlcNAc...) asparagine glycosylation occurs at N287. The pore-forming intramembrane region spans 298 to 318 (ADALWWGVVTVTTIGYGDKVP). Residues 319–320 (QT) lie on the Extracellular side of the membrane. A helical transmembrane segment spans residues 321 to 346 (WVGKTIASCFSVFAISFFALPAGILG). Topologically, residues 347 to 673 (SGFALKVQQK…VPGRGPEEGS (327 aa)) are cytoplasmic. The interval 368 to 380 (AAASLIQTAWRCY) is interaction with CALM. A phosphoserine mark is found at S405 and S407. The segment at 514 to 528 (KVIRRMQYFVAKKKF) is interaction with CALM; calcium-dependent. Residues 534–571 (PYDVRDVIEQYSQGHLNLMVRIKELQRRLDQSIGRPAL) are interaction with KCNE1 C-terminus. Residues 587–615 (IGARLNRVEDKVTQLDQRLELITDMLQQL) are interaction with AKAP9. Positions 588 to 619 (GARLNRVEDKVTQLDQRLELITDMLQQLLSLH) are C-terminal assembly domain (tetramerization). Residues 619–673 (HRGGTPGSRAPGGGGAQVAQPCSGGSINPELFLPSNALPTYEQLTVPGRGPEEGS) are disordered. Gly residues predominate over residues 622-634 (GTPGSRAPGGGGA).

Belongs to the potassium channel family. KQT (TC 1.A.1.15) subfamily. Kv7.1/KCNQ1 sub-subfamily. As to quaternary structure, tetramer. Heterotetramer with KCNE1; targets to the membrane raft. Interacts (via C-terminus) with CALM; forms a heterooctameric structure (with 4:4 KCNQ1:CALM stoichiometry) in a calcium-independent manner. Interacts with AKAP9; targets protein kinase A (PKA) catalytic and regulatory subunits and protein phosphatase 1 (PP1) to the KCNQ1-KCNE1 complex, allowing PKA-mediated phosphorylation and increase of delayed rectifier potassium channel activity. Interacts with KCNE2; form a heterooligomer complex that targets to the membrane raft and leading to currents with an apparently instantaneous activation, a rapid deactivation process and a linear current-voltage relationship and decreases the amplitude of the outward current. Interacts with AP2M1; mediates estrogen-induced internalization via clathrin-coated vesicles. Interacts with NEDD4L; promotes internalization and decreases I(Ks) currents. Interacts with USP2; counteracts the NEDD4L-specific down-regulation of I(Ks) and restore plasma membrane localization. Heterotetramer with KCNQ5; has a voltage-gated potassium channel activity. Interacts with KCNE3; four KCNE3 molecules are bound to one KCNQ1 tetramer (4:4 KCNQ1:KCNE3 stoichiometry); alters membrane raft localization; affects KCNQ1 structure and gating properties. Interacts with KCNE4; impairs KCNQ1 localization in lipid rafts and inhibits voltage-gated potassium channel activity. Interacts with KCNE5; impairs KCNQ1 localization in lipid rafts and only conducts current upon strong and continued depolarization. Interacts with SLC5A3; forms coregulatory channel-transporter complexes that modulate Na(+)-coupled myo-inositol influx through the transporter. Post-translationally, ubiquitinated by NEDD4L; promotes internalization. The ubiquitinylated form is internalized through a clathrin-mediated endocytosis by interacting with AP2M1 and is recycled back to the cell membrane via RAB4A and RAB11A. In terms of processing, deubiquitinated by USP2; counteracts the NEDD4L-specific down-regulation of I(Ks) and restores the membrane localization.

The protein resides in the cell membrane. It localises to the cytoplasmic vesicle membrane. The protein localises to the early endosome. Its subcellular location is the membrane raft. It is found in the endoplasmic reticulum. The protein resides in the basolateral cell membrane. It localises to the apical cell membrane. It catalyses the reaction K(+)(in) = K(+)(out). Its activity is regulated as follows. PIP2 molecule is essential to activate KCNQ channels by inducing the coupling of the voltage-sensing domain (VSD) and the pore-forming domain (PD). Upon channel activation, PIP2 disrupts the VSD-calmodulin/CALM interactions, causing the release of CALM from the VSD which triggers the opening of the gate. Calcium potentiates KCNQ1 channel current through calcium-bound CALM. Calcium-bound CALM competes with PIP2 to stabilize the channel open state. In terms of biological role, pore-forming subunit of the voltage-gated potassium (Kv) channel involved in the regulation of cardiomyocyte excitability and important in normal development and functions of myocardium, inner ear, stomach and colon. Associates with KCNE beta subunits that modulates current kinetics. Induces a voltage-dependent by rapidly activating and slowly deactivating potassium-selective outward current. Also promotes a delayed voltage activated potassium current showing outward rectification characteristic. During beta-adrenergic receptor stimulation participates in cardiac repolarization by associating with KCNE1 to form the I(Ks) cardiac potassium current that increases the amplitude and slows down the activation kinetics of outward potassium current I(Ks). Muscarinic agonist oxotremorine-M strongly suppresses KCNQ1/KCNE1 current. When associated with KCNE3, forms the potassium channel that is important for cyclic AMP-stimulated intestinal secretion of chloride ions. This interaction with KCNE3 is reduced by 17beta-estradiol, resulting in the reduction of currents. During conditions of increased substrate load, maintains the driving force for proximal tubular and intestinal sodium ions absorption, gastric acid secretion, and cAMP-induced jejunal chloride ions secretion. Allows the provision of potassium ions to the luminal membrane of the secretory canaliculus in the resting state as well as during stimulated acid secretion. When associated with KCNE2, forms a heterooligomer complex leading to currents with an apparently instantaneous activation, a rapid deactivation process and a linear current-voltage relationship and decreases the amplitude of the outward current. When associated with KCNE4, inhibits voltage-gated potassium channel activity. When associated with KCNE5, this complex only conducts current upon strong and continued depolarization. Also forms a heterotetramer with KCNQ5 that has a voltage-gated potassium channel activity. Binds with phosphatidylinositol 4,5-bisphosphate. KCNQ1-KCNE2 channel associates with Na(+)-coupled myo-inositol symporter in the apical membrane of choroid plexus epithelium and regulates the myo-inositol gradient between blood and cerebrospinal fluid with an impact on neuron excitability. The polypeptide is Potassium voltage-gated channel subfamily KQT member 1 (Sus scrofa (Pig)).